We begin with the raw amino-acid sequence, 557 residues long: Alpha-glucosidase (557 aa).

Asp201 (nucleophile) is an active-site residue. Glu256 (proton donor) is an active-site residue.

Belongs to the glycosyl hydrolase 13 family.

The enzyme catalyses Hydrolysis of terminal, non-reducing (1-&gt;4)-linked alpha-D-glucose residues with release of alpha-D-glucose.. The protein is Alpha-glucosidase (agl) of Pediococcus pentosaceus.